Consider the following 476-residue polypeptide: Angiotensinogen (476 aa).

The signal sequence occupies residues 1–24; it reads MAPAGMSLRATILCLLAWAGLAAG. N-linked (GlcNAc...) asparagine glycans are attached at residues asparagine 38, asparagine 161, asparagine 295, and asparagine 319. A disulfide bridge connects residues cysteine 42 and cysteine 162.

Belongs to the serpin family. In response to low blood pressure, the enzyme renin/REN cleaves angiotensinogen to produce angiotensin-1. Angiotensin-1 is a substrate of ACE (angiotensin converting enzyme) that removes a dipeptide to yield the physiologically active peptide angiotensin-2. Angiotensin-1 and angiotensin-2 can be further processed to generate angiotensin-3, angiotensin-4. Angiotensin 1-9 is cleaved from angiotensin-1 by ACE2 and can be further processed by ACE to produce angiotensin 1-7, angiotensin 1-5 and angiotensin 1-4. Angiotensin 1-7 has also been proposed to be cleaved from angiotensin-2 by ACE2 or from angiotensin-1 by MME (neprilysin). In terms of processing, the disulfide bond is labile. Angiotensinogen is present in the circulation in a near 40:60 ratio with the oxidized disulfide-bonded form, which preferentially interacts with receptor-bound renin.

It is found in the secreted. In terms of biological role, essential component of the renin-angiotensin system (RAS), a potent regulator of blood pressure, body fluid and electrolyte homeostasis. Its function is as follows. Acts directly on vascular smooth muscle as a potent vasoconstrictor, affects cardiac contractility and heart rate through its action on the sympathetic nervous system, and alters renal sodium and water absorption through its ability to stimulate the zona glomerulosa cells of the adrenal cortex to synthesize and secrete aldosterone. Acts by binding to angiotensin receptors AGTR1 and AGTR2. Also binds the DEAR/FBXW7-AS1 receptor. Functionally, stimulates aldosterone release. Is a ligand for the G-protein coupled receptor MAS1. Has vasodilator and antidiuretic effects. Has an antithrombotic effect that involves MAS1-mediated release of nitric oxide from platelets. This Gorilla gorilla gorilla (Western lowland gorilla) protein is Angiotensinogen (AGT).